Consider the following 238-residue polypeptide: MRNQHSLEEIAEIHSLLEDIKGEYEKGIRAVIKKNNPELFGNPHTIPKLQKIQINRGLGLAAQNTNILKKSINEFTAITGQKPIITRAKKAIAGFKIRENMELGLTVTLRGSKMYSFLTKLIFFTFAQIRDFRGLSVRSFDKAGNYTLGLKEQLIFPEIDYDDVDQTQGFSITLVFSSTAPKSRSKTMDRVLNGMVLFKFLRFPLNDSGYYDKYSSFSEVSQAWDRKKHLRRKRWSQE.

Belongs to the universal ribosomal protein uL5 family. In terms of assembly, part of the 50S ribosomal subunit; contacts the 5S rRNA.

Its subcellular location is the plastid. It localises to the chloroplast. In terms of biological role, binds 5S rRNA, forms part of the central protuberance of the 50S subunit. The protein is Large ribosomal subunit protein uL5c (rpl5) of Trieres chinensis (Marine centric diatom).